The following is a 357-amino-acid chain: MGTIQEAGKKTDVGVREIAEAPELGAALRHGELELKEEWQDEEFPRLLPEEAGTSEDPEDPKGDSQAAAGTPSTLALCGQRPMRKRLSAPELRLSLTKGPGNDGASPTQSAPSSPDGSSDLEIDELETPSDSEQLDSGHEFEWEDELPRAEGLGTSETAERLGRGCMWDVTGEDGHHWRVFRMGPREQRVDMTVIEPYKKVLSHGGYHGDGLNAVILFASCYLPRSSIPNYTYVMEHLFRYMVGTLELLVAENYLLVHLSGGTSRAQVPPLSWIRQCYRTLDRRLRKNLRALVVVHATWYVKAFLALLRPFISSKFTRKIRFLDSLGELAQLISLDQVHIPEAVRQLDRDLHGSGGT.

Basic and acidic residues predominate over residues 32-49; that stretch reads ELELKEEWQDEEFPRLLP. Residues 32–156 form a disordered region; the sequence is ELELKEEWQD…LPRAEGLGTS (125 aa). Residues 105 to 117 are compositionally biased toward polar residues; the sequence is ASPTQSAPSSPDG. The segment covering 119-134 has biased composition (acidic residues); that stretch reads SDLEIDELETPSDSEQ. The span at 136–149 shows a compositional bias: basic and acidic residues; the sequence is DSGHEFEWEDELPR. Residues 191–352 enclose the CRAL-TRIO domain; sequence DMTVIEPYKK…AVRQLDRDLH (162 aa).

As to quaternary structure, homodimer. Interacts with BCL2, ARHGAP1, MIF and GFER. As to expression, isoform 2 is expressed in placenta and lung.

May be a bridge molecule between BCL2 and ARHGAP1/CDC42 in promoting cell death. The protein is Bcl-2/adenovirus E1B 19 kDa-interacting protein 2-like protein (BNIPL) of Homo sapiens (Human).